A 175-amino-acid chain; its full sequence is Protein FMP23, mitochondrial (175 aa).

A mitochondrion-targeting transit peptide spans 1–38 (MLINHLSKIRTVRHFSNIKPVLSKEVSRRVIVAPASHF).

The protein resides in the mitochondrion. May be involved in mitochondrial iron or copper homeostatis. The polypeptide is Protein FMP23, mitochondrial (FMP23) (Saccharomyces cerevisiae (strain ATCC 204508 / S288c) (Baker's yeast)).